The primary structure comprises 108 residues: UPF0060 membrane protein amb3269 (108 aa).

A run of 4 helical transmembrane segments spans residues I4–W24, P31–I51, A59–E79, and R85–P105.

It belongs to the UPF0060 family.

It localises to the cell inner membrane. This chain is UPF0060 membrane protein amb3269, found in Paramagnetospirillum magneticum (strain ATCC 700264 / AMB-1) (Magnetospirillum magneticum).